The following is a 57-amino-acid chain: UPF0391 membrane protein RPB_2510 (57 aa).

Helical transmembrane passes span 6–26 (WALI…TGIS) and 35–55 (ILFY…FTIF).

This sequence belongs to the UPF0391 family.

The protein resides in the cell membrane. The polypeptide is UPF0391 membrane protein RPB_2510 (Rhodopseudomonas palustris (strain HaA2)).